Consider the following 273-residue polypeptide: Phosphate import ATP-binding protein PstB (273 aa).

The region spanning 27–268 (VTVRDLNFYY…PSDRRTQDYI (242 aa)) is the ABC transporter domain. 59–66 (GPSGCGKS) contacts ATP.

It belongs to the ABC transporter superfamily. Phosphate importer (TC 3.A.1.7) family. In terms of assembly, the complex is composed of two ATP-binding proteins (PstB), two transmembrane proteins (PstC and PstA) and a solute-binding protein (PstS).

It localises to the cell inner membrane. The catalysed reaction is phosphate(out) + ATP + H2O = ADP + 2 phosphate(in) + H(+). Part of the ABC transporter complex PstSACB involved in phosphate import. Responsible for energy coupling to the transport system. The sequence is that of Phosphate import ATP-binding protein PstB from Rhodopseudomonas palustris (strain ATCC BAA-98 / CGA009).